The chain runs to 115 residues: MKISRLGEAPDYRFSLANERTFLAWIRTALGFLAAGVGLDQLAPDFATPVIRELLALLLCLFSGGLAMYGYLRWLRNEKAMRLKEDLPYTNSLLIISLILMVVAVIVMGLVLYAG.

The Cytoplasmic segment spans residues 1–30; the sequence is MKISRLGEAPDYRFSLANERTFLAWIRTAL. Residues 31 to 51 form a helical membrane-spanning segment; that stretch reads GFLAAGVGLDQLAPDFATPVI. Residues 52–53 lie on the Periplasmic side of the membrane; that stretch reads RE. The chain crosses the membrane as a helical span at residues 54–74; the sequence is LLALLLCLFSGGLAMYGYLRW. The Cytoplasmic portion of the chain corresponds to 75–92; sequence LRNEKAMRLKEDLPYTNS. Residues 93 to 113 traverse the membrane as a helical segment; that stretch reads LLIISLILMVVAVIVMGLVLY. Residues 114–115 lie on the Periplasmic side of the membrane; that stretch reads AG.

To M.tuberculosis Rv2272.

It localises to the cell inner membrane. In Escherichia coli O157:H7, this protein is Inner membrane protein YidH (yidH).